The chain runs to 282 residues: NADPH-dependent 7-cyano-7-deazaguanine reductase (282 aa).

88 to 90 is a binding site for substrate; sequence IES. 90–91 is a binding site for NADPH; sequence SK. The Thioimide intermediate role is filled by Cys-189. Catalysis depends on Asp-196, which acts as the Proton donor. 228–229 lines the substrate pocket; that stretch reads HE. 257-258 is a binding site for NADPH; the sequence is RG.

Belongs to the GTP cyclohydrolase I family. QueF type 2 subfamily. As to quaternary structure, homodimer.

It localises to the cytoplasm. The catalysed reaction is 7-aminomethyl-7-carbaguanine + 2 NADP(+) = 7-cyano-7-deazaguanine + 2 NADPH + 3 H(+). Its pathway is tRNA modification; tRNA-queuosine biosynthesis. Its function is as follows. Catalyzes the NADPH-dependent reduction of 7-cyano-7-deazaguanine (preQ0) to 7-aminomethyl-7-deazaguanine (preQ1). The protein is NADPH-dependent 7-cyano-7-deazaguanine reductase of Photorhabdus laumondii subsp. laumondii (strain DSM 15139 / CIP 105565 / TT01) (Photorhabdus luminescens subsp. laumondii).